The chain runs to 440 residues: Frizzled/smoothened-like sans CRD protein D (440 aa).

The N-terminal stretch at 1-27 (MFIILKFLISFFLICNFFNYNDHFASG) is a signal peptide. At 28 to 85 (QTLPPGFCPSPLIYRNSTNRQNDIENGYLFIGQTNCTSPCPSLIFSENEWHRVYNMSL) the chain is on the extracellular side. 3 N-linked (GlcNAc...) asparagine glycosylation sites follow: Asn-43, Asn-62, and Asn-82. A helical transmembrane segment spans residues 86-106 (IAGTISMFALIFLIITYSPLV). At 107–110 (NKYN) the chain is on the cytoplasmic side. A helical membrane pass occupies residues 111–131 (GYTRHTVGILFLFCGIFLTVT). Residues 132-162 (TDGRQLWDIDLGFEKYCPEPGRFARQSDTKC) are Extracellular-facing. A helical transmembrane segment spans residues 163–183 (LVTAIFFQYGCVTSILWWAAI). Residues 184-200 (SVDLWMTIRKVKISKLQ) lie on the Cytoplasmic side of the membrane. Residues 201–221 (FITYAVILNIITLILTFAPIA) traverse the membrane as a helical segment. Residues 222 to 244 (SKQYGYGEAAIGCWLMDLKYQVG) are Extracellular-facing. A helical membrane pass occupies residues 245 to 265 (YFWAPVGFCLCVGCVSIVLII). Over 266–285 (REIYKVSDAIKKKLLAKHLK) the chain is Cytoplasmic. A helical membrane pass occupies residues 286 to 306 (PLMLIILMLSEFIYMFIFYSY). Residues 307–346 (TTSRRGHYHDVVEKYIRCLFINASNPSICEVDVSISSPAH) are Extracellular-facing. Residue Asn-328 is glycosylated (N-linked (GlcNAc...) asparagine). The helical transmembrane segment at 347 to 367 (FFFHFCMRLMGIEGLIFFGFT) threads the bilayer. Residues 368-440 (RQTKRIWLRS…IELSGVDSKN (73 aa)) lie on the Cytoplasmic side of the membrane. The interval 395–428 (ISSDEKTSNSSHRTTRGCRETEFGESIEQSNDPE) is disordered.

It belongs to the G-protein coupled receptor Fz/Smo family.

Its subcellular location is the membrane. The protein is Frizzled/smoothened-like sans CRD protein D (fscD) of Dictyostelium discoideum (Social amoeba).